Reading from the N-terminus, the 155-residue chain is SsrA-binding protein (155 aa).

It belongs to the SmpB family.

It is found in the cytoplasm. Its function is as follows. Required for rescue of stalled ribosomes mediated by trans-translation. Binds to transfer-messenger RNA (tmRNA), required for stable association of tmRNA with ribosomes. tmRNA and SmpB together mimic tRNA shape, replacing the anticodon stem-loop with SmpB. tmRNA is encoded by the ssrA gene; the 2 termini fold to resemble tRNA(Ala) and it encodes a 'tag peptide', a short internal open reading frame. During trans-translation Ala-aminoacylated tmRNA acts like a tRNA, entering the A-site of stalled ribosomes, displacing the stalled mRNA. The ribosome then switches to translate the ORF on the tmRNA; the nascent peptide is terminated with the 'tag peptide' encoded by the tmRNA and targeted for degradation. The ribosome is freed to recommence translation, which seems to be the essential function of trans-translation. The sequence is that of SsrA-binding protein from Geobacillus kaustophilus (strain HTA426).